The following is a 1379-amino-acid chain: DNA-directed RNA polymerase subunit beta'' (1379 aa).

C220, C293, C300, and C303 together coordinate Zn(2+).

It belongs to the RNA polymerase beta' chain family. RpoC2 subfamily. As to quaternary structure, in plastids the minimal PEP RNA polymerase catalytic core is composed of four subunits: alpha, beta, beta', and beta''. When a (nuclear-encoded) sigma factor is associated with the core the holoenzyme is formed, which can initiate transcription. Zn(2+) is required as a cofactor.

The protein resides in the plastid. The protein localises to the chloroplast. It carries out the reaction RNA(n) + a ribonucleoside 5'-triphosphate = RNA(n+1) + diphosphate. In terms of biological role, DNA-dependent RNA polymerase catalyzes the transcription of DNA into RNA using the four ribonucleoside triphosphates as substrates. The sequence is that of DNA-directed RNA polymerase subunit beta'' from Capsella bursa-pastoris (Shepherd's purse).